The primary structure comprises 189 residues: Inner membrane-spanning protein YciB (189 aa).

5 consecutive transmembrane segments (helical) span residues 3 to 23, 47 to 67, 76 to 96, 121 to 141, and 149 to 169; these read LLIDFFPIILFFVAFKVWGIY, IEPMQWVSLGVIVVFGGATLL, WKPTVLYWLMGGALLVGQLFF, WSWTAFFAAMGAINLWVAHAF, and FKLFGGIGLMAVFVIGQALYL.

The protein belongs to the YciB family.

Its subcellular location is the cell inner membrane. Its function is as follows. Plays a role in cell envelope biogenesis, maintenance of cell envelope integrity and membrane homeostasis. The protein is Inner membrane-spanning protein YciB of Paracidovorax citrulli (strain AAC00-1) (Acidovorax citrulli).